Here is a 388-residue protein sequence, read N- to C-terminus: Mannitol-1-phosphate 5-dehydrogenase (388 aa).

Position 4–15 (4–15 (AVHFGAGNIGRG)) interacts with NAD(+).

It belongs to the mannitol dehydrogenase family.

The catalysed reaction is D-mannitol 1-phosphate + NAD(+) = beta-D-fructose 6-phosphate + NADH + H(+). This Lactococcus lactis subsp. cremoris (strain SK11) protein is Mannitol-1-phosphate 5-dehydrogenase.